A 221-amino-acid chain; its full sequence is Small ribosomal subunit protein uS3 (221 aa).

The region spanning 39–108 (IRKFVKKELF…NVLINIVEVK (70 aa)) is the KH type-2 domain.

It belongs to the universal ribosomal protein uS3 family. As to quaternary structure, part of the 30S ribosomal subunit. Forms a tight complex with proteins S10 and S14.

Functionally, binds the lower part of the 30S subunit head. Binds mRNA in the 70S ribosome, positioning it for translation. The sequence is that of Small ribosomal subunit protein uS3 from Clostridium beijerinckii (strain ATCC 51743 / NCIMB 8052) (Clostridium acetobutylicum).